We begin with the raw amino-acid sequence, 196 residues long: Orotate phosphoribosyltransferase (196 aa).

5-phospho-alpha-D-ribose 1-diphosphate contacts are provided by residues Arg102, Lys103, Lys106, His108, and 129 to 137 (EDVVTTGGS). Positions 133 and 161 each coordinate orotate.

It belongs to the purine/pyrimidine phosphoribosyltransferase family. PyrE subfamily. As to quaternary structure, homodimer. Requires Mg(2+) as cofactor.

The catalysed reaction is orotidine 5'-phosphate + diphosphate = orotate + 5-phospho-alpha-D-ribose 1-diphosphate. It functions in the pathway pyrimidine metabolism; UMP biosynthesis via de novo pathway; UMP from orotate: step 1/2. Its function is as follows. Catalyzes the transfer of a ribosyl phosphate group from 5-phosphoribose 1-diphosphate to orotate, leading to the formation of orotidine monophosphate (OMP). The protein is Orotate phosphoribosyltransferase of Prochlorococcus marinus (strain MIT 9303).